The primary structure comprises 297 residues: D-aminoacyl-tRNA deacylase (297 aa).

Belongs to the DtdA deacylase family. As to quaternary structure, monomer. Zn(2+) is required as a cofactor.

The enzyme catalyses a D-aminoacyl-tRNA + H2O = a tRNA + a D-alpha-amino acid + H(+). It carries out the reaction glycyl-tRNA(Ala) + H2O = tRNA(Ala) + glycine + H(+). D-aminoacyl-tRNA deacylase with broad substrate specificity. By recycling D-aminoacyl-tRNA to D-amino acids and free tRNA molecules, this enzyme counteracts the toxicity associated with the formation of D-aminoacyl-tRNA entities in vivo. The polypeptide is D-aminoacyl-tRNA deacylase (Methanosarcina mazei (strain ATCC BAA-159 / DSM 3647 / Goe1 / Go1 / JCM 11833 / OCM 88) (Methanosarcina frisia)).